The sequence spans 840 residues: Probable inorganic carbon transporter subunit DabA 2 (840 aa).

4 residues coordinate Zn(2+): Cys356, Asp358, His540, and Cys555.

This sequence belongs to the inorganic carbon transporter (TC 9.A.2) DabA family. Forms a complex with DabB. Requires Zn(2+) as cofactor.

It localises to the cell inner membrane. Its function is as follows. Part of an energy-coupled inorganic carbon pump. This chain is Probable inorganic carbon transporter subunit DabA 2, found in Bradyrhizobium sp. (strain ORS 278).